The primary structure comprises 188 residues: Auxin-induced protein 22C (188 aa).

Positions 13 to 17 (LRLGL) match the EAR-like (transcriptional repression) motif. The disordered stretch occupies residues 16 to 57 (GLPGAGGENNTDKDKNKNKKRVFSDIEGENSSSEEDGKKETK). In terms of domain architecture, PB1 spans 79 to 167 (KLYVKVSMDG…KRLRIMKRSD (89 aa)).

The protein belongs to the Aux/IAA family. Homodimers and heterodimers.

It localises to the nucleus. Functionally, aux/IAA proteins are short-lived transcriptional factors that function as repressors of early auxin response genes at low auxin concentrations. Repression is thought to result from the interaction with auxin response factors (ARFs), proteins that bind to the auxin-responsive promoter element (AuxRE). Formation of heterodimers with ARF proteins may alter their ability to modulate early auxin response genes expression. The sequence is that of Auxin-induced protein 22C (AUX22C) from Vigna radiata var. radiata (Mung bean).